Reading from the N-terminus, the 544-residue chain is Calcium-dependent protein kinase 6 (544 aa).

Residues Met1 to Gln47 form a disordered region. Gly2 is lipidated: N-myristoyl glycine. The span at Ser8–Ser25 shows a compositional bias: basic and acidic residues. A compositionally biased stretch (low complexity) spans Lys26–Thr40. Residues Tyr85–Ile343 enclose the Protein kinase domain. ATP contacts are provided by residues Leu91–Thr99 and Lys114. The Proton acceptor role is filled by Asp209. At Ser249 the chain carries Phosphoserine. The interval Ala349–Ile379 is autoinhibitory domain. EF-hand domains are found at residues Glu386–Thr421, Leu422–Leu457, Glu458–Thr493, and Leu497–Gly527. Residues Asp399, Asp401, Ser403, Glu410, Asp435, Asp437, Ser439, Thr441, Glu446, Asp471, Asp473, Ser475, Tyr477, Glu482, Asp505, Asp507, Asp509, Arg511, and Glu516 each coordinate Ca(2+).

This sequence belongs to the protein kinase superfamily. Ser/Thr protein kinase family. CDPK subfamily. In terms of assembly, interacts with SLAC1. Interacts with FD. Expressed in both guard cells and mesophyll cells. Expressed in the shoot apical meristem.

It is found in the cell membrane. It localises to the nucleus. The catalysed reaction is L-seryl-[protein] + ATP = O-phospho-L-seryl-[protein] + ADP + H(+). The enzyme catalyses L-threonyl-[protein] + ATP = O-phospho-L-threonyl-[protein] + ADP + H(+). Its activity is regulated as follows. Activated by calcium. Autophosphorylation may play an important role in the regulation of the kinase activity. May play a role in signal transduction pathways that involve calcium as a second messenger. Functions in abscisic acid (ABA) regulation of guard cell S-type anion- and Ca(2+)-permeable channels and stomatal closure. Phosphorylates FD. This is Calcium-dependent protein kinase 6 (CPK6) from Arabidopsis thaliana (Mouse-ear cress).